The primary structure comprises 140 residues: MAIERTLSIIKPDATRRNLTGKINAKFEDAGLRIVAQKRIHLSLAQAQKFYGVHKDRPFFGELTEFMASEPVVVQVLEGEGAIAKNREVMGATNPANADEGTIRKEFALSVGENSVHGSDAPETAAEEIAFFFSGLELVG.

Positions 11, 59, 87, 93, 104, and 114 each coordinate ATP. The active-site Pros-phosphohistidine intermediate is the H117.

It belongs to the NDK family. In terms of assembly, homotetramer. The cofactor is Mg(2+).

The protein localises to the cytoplasm. It carries out the reaction a 2'-deoxyribonucleoside 5'-diphosphate + ATP = a 2'-deoxyribonucleoside 5'-triphosphate + ADP. The enzyme catalyses a ribonucleoside 5'-diphosphate + ATP = a ribonucleoside 5'-triphosphate + ADP. In terms of biological role, major role in the synthesis of nucleoside triphosphates other than ATP. The ATP gamma phosphate is transferred to the NDP beta phosphate via a ping-pong mechanism, using a phosphorylated active-site intermediate. The sequence is that of Nucleoside diphosphate kinase from Cereibacter sphaeroides (strain ATCC 17025 / ATH 2.4.3) (Rhodobacter sphaeroides).